Consider the following 172-residue polypeptide: HAD-like hydrolase superfamily protein P8B7.31 (172 aa).

Catalysis depends on Asp-14, which acts as the Nucleophile. Residues Asp-14, Asp-16, and Asp-137 each contribute to the Mg(2+) site. The active-site Proton donor is the Asp-16.

This sequence belongs to the HAD-like hydrolase superfamily.

The protein resides in the cytoplasm. It localises to the nucleus. This chain is HAD-like hydrolase superfamily protein P8B7.31, found in Schizosaccharomyces pombe (strain 972 / ATCC 24843) (Fission yeast).